A 247-amino-acid polypeptide reads, in one-letter code: MSKLFWAMLSFITRLPVPRRWSQGLDFEHYSRGIITFPLIGLLLGAISGLVFMVLQAWCGAPLAALFSVLVLVLMTGGFHLDGLADTCDGVFSARSRDRMLEIMRDSRLGTHGGLALIFVVLAKILVLSELALRGEPILASLAAACAVSRGTAALLMYRHRYAREEGLGNVFIGKIDGRQTCVTLGLAAIFAAVLLPGMHGVAAMVVTMVAIFILGQLLKRTLGGQTGDTLGAAIELGELVFLLALL.

Helical transmembrane passes span 34–54 (IITF…VFMV), 59–79 (CGAP…TGGF), 113–133 (GGLA…ELAL), 138–158 (ILAS…LLMY), and 194–214 (VLLP…AIFI).

Belongs to the CobS family. Mg(2+) is required as a cofactor.

It localises to the cell inner membrane. It catalyses the reaction alpha-ribazole + adenosylcob(III)inamide-GDP = adenosylcob(III)alamin + GMP + H(+). It carries out the reaction alpha-ribazole 5'-phosphate + adenosylcob(III)inamide-GDP = adenosylcob(III)alamin 5'-phosphate + GMP + H(+). The protein operates within cofactor biosynthesis; adenosylcobalamin biosynthesis; adenosylcobalamin from cob(II)yrinate a,c-diamide: step 7/7. In terms of biological role, joins adenosylcobinamide-GDP and alpha-ribazole to generate adenosylcobalamin (Ado-cobalamin). Also synthesizes adenosylcobalamin 5'-phosphate from adenosylcobinamide-GDP and alpha-ribazole 5'-phosphate. This chain is Adenosylcobinamide-GDP ribazoletransferase, found in Escherichia coli O157:H7.